Reading from the N-terminus, the 74-residue chain is Translational regulator CsrA (74 aa).

This sequence belongs to the CsrA/RsmA family. Homodimer; the beta-strands of each monomer intercalate to form a hydrophobic core, while the alpha-helices form wings that extend away from the core.

It localises to the cytoplasm. In terms of biological role, a translational regulator that binds mRNA to regulate translation initiation and/or mRNA stability. Usually binds in the 5'-UTR at or near the Shine-Dalgarno sequence preventing ribosome-binding, thus repressing translation. Its main target seems to be the major flagellin gene, while its function is anatagonized by FliW. The polypeptide is Translational regulator CsrA (Oceanobacillus iheyensis (strain DSM 14371 / CIP 107618 / JCM 11309 / KCTC 3954 / HTE831)).